A 252-amino-acid polypeptide reads, in one-letter code: MVRSKHMKILAANAQADSSNTEARQSLLFSQSPIPNAESRLLVAGVDEAGRGPLAGPVAVAAVVFDPNKPRINGLDDSKQLTAERREQLYARIVDRALSWSVVLIDSEEIDRINIYQATMLGMRRAVEGVAHVAGFARIDGNRVPKGLPCPAEALIGGDALDRAIMAASIVAKVTRDRLMHELHAQHPEYRFDQHKGYSTPMHLAALQTHGPCPQHRRSFAPVRLALEGREQGSAAIGDPEQLQVAQLVAPL.

The RNase H type-2 domain maps to 41–232; that stretch reads LLVAGVDEAG…VRLALEGREQ (192 aa). Asp47, Glu48, and Asp140 together coordinate a divalent metal cation.

Belongs to the RNase HII family. The cofactor is Mn(2+). Requires Mg(2+) as cofactor.

The protein resides in the cytoplasm. The enzyme catalyses Endonucleolytic cleavage to 5'-phosphomonoester.. In terms of biological role, endonuclease that specifically degrades the RNA of RNA-DNA hybrids. The polypeptide is Ribonuclease HII (Xanthomonas oryzae pv. oryzae (strain KACC10331 / KXO85)).